A 292-amino-acid chain; its full sequence is Elongation factor Ts (292 aa).

An involved in Mg(2+) ion dislocation from EF-Tu region spans residues 79–82; sequence TDFV.

It belongs to the EF-Ts family.

It localises to the cytoplasm. Associates with the EF-Tu.GDP complex and induces the exchange of GDP to GTP. It remains bound to the aminoacyl-tRNA.EF-Tu.GTP complex up to the GTP hydrolysis stage on the ribosome. The sequence is that of Elongation factor Ts from Xanthomonas axonopodis pv. citri (strain 306).